The primary structure comprises 279 residues: Borealin (279 aa).

The span at 135-152 (KTKAKVAAKKPSTARKTR) shows a compositional bias: basic residues. Residues 135 to 180 (KTKAKVAAKKPSTARKTRASTANLTNTSKRTSKRGRATPSASKQIE) form a disordered region. Positions 153–163 (ASTANLTNTSK) are enriched in polar residues.

It belongs to the borealin family. As to quaternary structure, component of the CPC at least composed of survivin/birc5, incenp, cdca8/borealin and/or cdca9/dasra-A, and aurkb/aurora-B. Interacts with incenp (via N-terminus).

It localises to the nucleus. Its subcellular location is the chromosome. It is found in the centromere. The protein localises to the cytoplasm. The protein resides in the cytoskeleton. It localises to the spindle. Functionally, component of the chromosomal passenger complex (CPC), a complex that acts as a key regulator of mitosis. The CPC complex has essential functions at the centromere in ensuring correct chromosome alignment and segregation and is required for chromatin-induced microtubule stabilization and spindle assembly. Contributes to CPC function by facilitating loading of the CPC onto chromosomes. This chain is Borealin (cdca8), found in Xenopus tropicalis (Western clawed frog).